The sequence spans 621 residues: tRNA uridine 5-carboxymethylaminomethyl modification enzyme MnmG (621 aa).

FAD is bound at residue glycine 9–glycine 14. Glycine 268–phenylalanine 282 contacts NAD(+).

The protein belongs to the MnmG family. As to quaternary structure, homodimer. Heterotetramer of two MnmE and two MnmG subunits. It depends on FAD as a cofactor.

It localises to the cytoplasm. In terms of biological role, NAD-binding protein involved in the addition of a carboxymethylaminomethyl (cmnm) group at the wobble position (U34) of certain tRNAs, forming tRNA-cmnm(5)s(2)U34. The sequence is that of tRNA uridine 5-carboxymethylaminomethyl modification enzyme MnmG from Campylobacter fetus subsp. fetus (strain 82-40).